The following is a 276-amino-acid chain: Putative hydro-lyase Xaut_1503 (276 aa).

It belongs to the D-glutamate cyclase family.

The protein is Putative hydro-lyase Xaut_1503 of Xanthobacter autotrophicus (strain ATCC BAA-1158 / Py2).